Here is a 486-residue protein sequence, read N- to C-terminus: Protein nucleotidyltransferase YdiU (486 aa).

The ATP site is built by G90, G92, R93, K113, D125, G126, R176, and R183. D252 (proton acceptor) is an active-site residue. Mg(2+)-binding residues include N253 and D262. D262 lines the ATP pocket.

This sequence belongs to the SELO family. The cofactor is Mg(2+). It depends on Mn(2+) as a cofactor.

It catalyses the reaction L-seryl-[protein] + ATP = 3-O-(5'-adenylyl)-L-seryl-[protein] + diphosphate. It carries out the reaction L-threonyl-[protein] + ATP = 3-O-(5'-adenylyl)-L-threonyl-[protein] + diphosphate. The enzyme catalyses L-tyrosyl-[protein] + ATP = O-(5'-adenylyl)-L-tyrosyl-[protein] + diphosphate. The catalysed reaction is L-histidyl-[protein] + UTP = N(tele)-(5'-uridylyl)-L-histidyl-[protein] + diphosphate. It catalyses the reaction L-seryl-[protein] + UTP = O-(5'-uridylyl)-L-seryl-[protein] + diphosphate. It carries out the reaction L-tyrosyl-[protein] + UTP = O-(5'-uridylyl)-L-tyrosyl-[protein] + diphosphate. Its function is as follows. Nucleotidyltransferase involved in the post-translational modification of proteins. It can catalyze the addition of adenosine monophosphate (AMP) or uridine monophosphate (UMP) to a protein, resulting in modifications known as AMPylation and UMPylation. This Pseudomonas aeruginosa (strain UCBPP-PA14) protein is Protein nucleotidyltransferase YdiU.